Consider the following 245-residue polypeptide: uncharacterized protein (245 aa).

The next 4 helical transmembrane spans lie at Phe-10 to Tyr-30, Thr-94 to Ile-114, Val-134 to Ile-154, and Arg-196 to Trp-216.

Its subcellular location is the membrane. This is an uncharacterized protein from Dictyostelium discoideum (Social amoeba).